Reading from the N-terminus, the 98-residue chain is Large ribosomal subunit protein uL23 (98 aa).

This sequence belongs to the universal ribosomal protein uL23 family. As to quaternary structure, part of the 50S ribosomal subunit. Contacts protein L29, and trigger factor when it is bound to the ribosome.

In terms of biological role, one of the early assembly proteins it binds 23S rRNA. One of the proteins that surrounds the polypeptide exit tunnel on the outside of the ribosome. Forms the main docking site for trigger factor binding to the ribosome. In Caulobacter sp. (strain K31), this protein is Large ribosomal subunit protein uL23.